The primary structure comprises 603 residues: Peroxisomal targeting signal receptor (603 aa).

Cys10 is covalently cross-linked (Glycyl cysteine thioester (Cys-Gly) (interchain with G-Cter in ubiquitin)). The amphipathic helix 1 (AH1) stretch occupies residues 11–33 (SANSNAIAQFNKHTQQDRSLQRQ). A Glycyl lysine isopeptide (Lys-Gly) (interchain with G-Cter in ubiquitin) cross-link involves residue Lys22. The interval 23–49 (HTQQDRSLQRQAANQQGIVQNGQGFKK) is disordered. A compositionally biased stretch (polar residues) spans 31 to 45 (QRQAANQQGIVQNGQ). The interval 58-76 (RQNMDQFMNNGPSQSNFQF) is amphipathic helix 2 (AH2). 3 consecutive short sequence motifs (wxxxF/Y motif) follow at residues 99–103 (WTNEF), 128–132 (WATEF), and 192–196 (WDNQF). The tract at residues 232-248 (FQEVWDSLNSEEVENDF) is amphipathic helix 4 (AH4). A WxxxF/Y motif 4 motif is present at residues 271–275 (WEKDF). TPR repeat units follow at residues 304-338 (ESDP…NEGH), 339-372 (INAW…HPEN), 449-482 (PDVQ…KPDD), 484-516 (VLWN…KPTF), and 518-550 (RARY…HQVE).

This sequence belongs to the peroxisomal targeting signal receptor family. Interacts (via WxxxF/Y and LVxEF motifs) with PEX14; promoting translocation through the PEX13-PEX14 docking complex. Post-translationally, monoubiquitinated at Cys-10 by PEX2 during PEX5 passage through the retrotranslocation channel: monoubiquitination acts as a signal for PEX5 extraction and is required for proper export from peroxisomes and recycling. When PEX5 recycling is compromised, polyubiquitinated at Lys-22 by PEX10 during its passage through the retrotranslocation channel, leading to its degradation.

It localises to the cytoplasm. Its subcellular location is the cytosol. The protein localises to the peroxisome matrix. In terms of biological role, receptor that mediates peroxisomal import of proteins containing a C-terminal PTS1-type tripeptide peroxisomal targeting signal (SKL-type). Binds to cargo proteins containing a PTS1 peroxisomal targeting signal in the cytosol, and translocates them into the peroxisome matrix by passing through the PEX13-PEX14 docking complex along with cargo proteins. PEX5 receptor is then retrotranslocated into the cytosol, leading to release of bound cargo in the peroxisome matrix, and reset for a subsequent peroxisome import cycle. The protein is Peroxisomal targeting signal receptor (PEX5) of Debaryomyces hansenii (strain ATCC 36239 / CBS 767 / BCRC 21394 / JCM 1990 / NBRC 0083 / IGC 2968) (Yeast).